The following is a 446-amino-acid chain: Tetratricopeptide repeat protein 23 (446 aa).

TPR repeat units follow at residues Leu45 to Cys78, Val137 to Met170, Ala186 to Ser219, Thr310 to Val347, and Ala356 to Leu389. The segment at Ala410–Asp446 is disordered.

Associated with the EvC complex composed of EFCAB7, IQCE, EVC2 and EVC.

It is found in the cell projection. The protein localises to the cilium. Functionally, participates positively in the ciliary Hedgehog (Hh) signaling. The polypeptide is Tetratricopeptide repeat protein 23 (TTC23) (Bos taurus (Bovine)).